A 1399-amino-acid polypeptide reads, in one-letter code: DNA-directed RNA polymerase subunit beta' (1399 aa).

Zn(2+)-binding residues include Cys-71, Cys-73, Cys-86, and Cys-89. Mg(2+) contacts are provided by Asp-462, Asp-464, and Asp-466. Residues Cys-810, Cys-884, Cys-891, and Cys-894 each coordinate Zn(2+). A disordered region spans residues 1379–1399 (KQAAIVPSQPEPQPLALPPAE). The span at 1387–1399 (QPEPQPLALPPAE) shows a compositional bias: pro residues.

Belongs to the RNA polymerase beta' chain family. The RNAP catalytic core consists of 2 alpha, 1 beta, 1 beta' and 1 omega subunit. When a sigma factor is associated with the core the holoenzyme is formed, which can initiate transcription. Mg(2+) is required as a cofactor. It depends on Zn(2+) as a cofactor.

The catalysed reaction is RNA(n) + a ribonucleoside 5'-triphosphate = RNA(n+1) + diphosphate. DNA-dependent RNA polymerase catalyzes the transcription of DNA into RNA using the four ribonucleoside triphosphates as substrates. In Bradyrhizobium sp. (strain ORS 278), this protein is DNA-directed RNA polymerase subunit beta'.